The following is a 437-amino-acid chain: Enolase (437 aa).

Gln166 contacts (2R)-2-phosphoglycerate. The active-site Proton donor is Glu208. Residues Asp245, Glu295, and Asp322 each coordinate Mg(2+). Residues Lys347, Arg376, Ser377, and Lys398 each contribute to the (2R)-2-phosphoglycerate site. The active-site Proton acceptor is the Lys347.

The protein belongs to the enolase family. It depends on Mg(2+) as a cofactor.

The protein localises to the cytoplasm. It is found in the secreted. It localises to the cell surface. The catalysed reaction is (2R)-2-phosphoglycerate = phosphoenolpyruvate + H2O. Its pathway is carbohydrate degradation; glycolysis; pyruvate from D-glyceraldehyde 3-phosphate: step 4/5. In terms of biological role, catalyzes the reversible conversion of 2-phosphoglycerate (2-PG) into phosphoenolpyruvate (PEP). It is essential for the degradation of carbohydrates via glycolysis. This chain is Enolase, found in Lachnoclostridium phytofermentans (strain ATCC 700394 / DSM 18823 / ISDg) (Clostridium phytofermentans).